The primary structure comprises 407 residues: Argininosuccinate synthase (407 aa).

Residues 16–24 (AYSGGLDTS) and Ala-44 each bind ATP. Tyr-96 and Ser-101 together coordinate L-citrulline. Gly-126 is an ATP binding site. Residues Thr-128, Asn-132, and Asp-133 each coordinate L-aspartate. Position 132 (Asn-132) interacts with L-citrulline. Positions 136, 185, 194, 270, and 282 each coordinate L-citrulline.

It belongs to the argininosuccinate synthase family. Type 1 subfamily. Homotetramer.

It localises to the cytoplasm. It carries out the reaction L-citrulline + L-aspartate + ATP = 2-(N(omega)-L-arginino)succinate + AMP + diphosphate + H(+). It participates in amino-acid biosynthesis; L-arginine biosynthesis; L-arginine from L-ornithine and carbamoyl phosphate: step 2/3. In Shewanella sediminis (strain HAW-EB3), this protein is Argininosuccinate synthase.